The chain runs to 160 residues: 2-C-methyl-D-erythritol 2,4-cyclodiphosphate synthase (160 aa).

2 residues coordinate a divalent metal cation: D10 and H12. Residues 10–12 (DVH) and 36–37 (HS) contribute to the 4-CDP-2-C-methyl-D-erythritol 2-phosphate site. H44 provides a ligand contact to a divalent metal cation. Residues 58 to 60 (DIG), 63 to 67 (FPDTD), and R144 each bind 4-CDP-2-C-methyl-D-erythritol 2-phosphate.

This sequence belongs to the IspF family. In terms of assembly, homotrimer. A divalent metal cation is required as a cofactor.

It catalyses the reaction 4-CDP-2-C-methyl-D-erythritol 2-phosphate = 2-C-methyl-D-erythritol 2,4-cyclic diphosphate + CMP. Its pathway is isoprenoid biosynthesis; isopentenyl diphosphate biosynthesis via DXP pathway; isopentenyl diphosphate from 1-deoxy-D-xylulose 5-phosphate: step 4/6. In terms of biological role, involved in the biosynthesis of isopentenyl diphosphate (IPP) and dimethylallyl diphosphate (DMAPP), two major building blocks of isoprenoid compounds. Catalyzes the conversion of 4-diphosphocytidyl-2-C-methyl-D-erythritol 2-phosphate (CDP-ME2P) to 2-C-methyl-D-erythritol 2,4-cyclodiphosphate (ME-CPP) with a corresponding release of cytidine 5-monophosphate (CMP). This Dechloromonas aromatica (strain RCB) protein is 2-C-methyl-D-erythritol 2,4-cyclodiphosphate synthase.